Reading from the N-terminus, the 273-residue chain is Putative phosphoenolpyruvate synthase regulatory protein (273 aa).

153-160 (AVSRAGKT) serves as a coordination point for ADP.

This sequence belongs to the pyruvate, phosphate/water dikinase regulatory protein family. PSRP subfamily.

It catalyses the reaction [pyruvate, water dikinase] + ADP = [pyruvate, water dikinase]-phosphate + AMP + H(+). It carries out the reaction [pyruvate, water dikinase]-phosphate + phosphate + H(+) = [pyruvate, water dikinase] + diphosphate. Bifunctional serine/threonine kinase and phosphorylase involved in the regulation of the phosphoenolpyruvate synthase (PEPS) by catalyzing its phosphorylation/dephosphorylation. This chain is Putative phosphoenolpyruvate synthase regulatory protein, found in Xylella fastidiosa (strain 9a5c).